The following is a 75-amino-acid chain: Veswaprin-c (75 aa).

The signal sequence occupies residues 1 to 24; sequence MSSGGLLLLLGLLTLWAELTPVSS. In terms of domain architecture, WAP spans 27–72; that stretch reads RPKKPGLCPPRPQKPPCVRECKNDWRCPGERKCCRYGCIYECRDPI. Disulfide bonds link Cys34-Cys60, Cys43-Cys64, Cys47-Cys59, and Cys53-Cys68.

The protein belongs to the venom waprin family. Expressed by the venom gland.

The protein resides in the secreted. Damages membranes of susceptible bacteria. Has no hemolytic activity. Not toxic to mice. Does not inhibit the proteinases elastase and cathepsin G. This is Veswaprin-c from Demansia vestigiata (Lesser black whip snake).